The following is a 387-amino-acid chain: MSHRKYEAPRHGHLGFLPRKRAASIRARVKAFPKDDRSKPVALTSFLGYKAGMTTIVRDLDRPGSKFHKREVVEAVTVVDTPPVVVVGVVGYVETPRGLRSLTTVWAEHLSDEVKRRFYKNWYKSKKKAFTKYSAKYAQDGAGIERELARIKKYASVVRVLVHTQIRKTPLAQKKAHLAEIQLNGGSISEKVDWAREHFEKTVAVDSVFEQNEMIDAIAVTKGHGFEGVTHRWGTKKLPRKTHRGLRKVACIGAWHPAHVMWSVARAGQRGYHSRTSINHKIYRVGKGDDEANGATSFDRTKKTITPMGGFVHYGEIKNDFIMVKGCIPGNRKRIVTLRKSLYTNTSRKALEEVSLKWIDTASKFGKGRFQTPAEKHAFMGTLKKDL.

Ser24 carries the phosphoserine modification. A Glycyl lysine isopeptide (Lys-Gly) (interchain with G-Cter in ubiquitin) cross-link involves residue Lys39. Phosphothreonine is present on Thr103. A Glycyl lysine isopeptide (Lys-Gly) (interchain with G-Cter in ubiquitin) cross-link involves residue Lys136. At Ser156 the chain carries Phosphoserine. His243 is modified (pros-methylhistidine). Ser297 carries the phosphoserine modification.

Belongs to the universal ribosomal protein uL3 family. Component of the large ribosomal subunit (LSU). Mature yeast ribosomes consist of a small (40S) and a large (60S) subunit. The 40S small subunit contains 1 molecule of ribosomal RNA (18S rRNA) and 33 different proteins (encoded by 57 genes). The large 60S subunit contains 3 rRNA molecules (25S, 5.8S and 5S rRNA) and 46 different proteins (encoded by 81 genes). uL3 forms together with ES39L one of the contact sites for the signal recognition particle that targets ribosomes to the endoplasmic reticulum membrane. In terms of processing, methylation at His-243 by HPM1 is required for proper 60S subunit assembly and promotes translational elongation fidelity.

It is found in the cytoplasm. Its function is as follows. Component of the ribosome, a large ribonucleoprotein complex responsible for the synthesis of proteins in the cell. The small ribosomal subunit (SSU) binds messenger RNAs (mRNAs) and translates the encoded message by selecting cognate aminoacyl-transfer RNA (tRNA) molecules. The large subunit (LSU) contains the ribosomal catalytic site termed the peptidyl transferase center (PTC), which catalyzes the formation of peptide bonds, thereby polymerizing the amino acids delivered by tRNAs into a polypeptide chain. The nascent polypeptides leave the ribosome through a tunnel in the LSU and interact with protein factors that function in enzymatic processing, targeting, and the membrane insertion of nascent chains at the exit of the ribosomal tunnel. uL3 plays a role in coordinating processes of accommodating the aminoacyl-tRNA in the PTC. This chain is Large ribosomal subunit protein uL3, found in Saccharomyces cerevisiae (strain ATCC 204508 / S288c) (Baker's yeast).